Reading from the N-terminus, the 911-residue chain is Leucine--tRNA ligase (911 aa).

A 'HIGH' region motif is present at residues 42 to 52; it reads PYPSGKLHMGH. The 'KMSKS' region signature appears at 659–663; sequence TMSKS. Residue Lys-662 coordinates ATP.

The protein belongs to the class-I aminoacyl-tRNA synthetase family.

The protein localises to the cytoplasm. The enzyme catalyses tRNA(Leu) + L-leucine + ATP = L-leucyl-tRNA(Leu) + AMP + diphosphate. This Delftia acidovorans (strain DSM 14801 / SPH-1) protein is Leucine--tRNA ligase.